The following is a 206-amino-acid chain: Ras-related protein Rab7 (206 aa).

Residues 15–22, 63–67, and 125–128 each bind GTP; these read GDSGVGKT, DTAGQ, and NKID. Residues Cys204 and Cys206 are each lipidated (S-geranylgeranyl cysteine). Cys206 carries the cysteine methyl ester modification.

It belongs to the small GTPase superfamily. Rab family.

It is found in the cell membrane. Protein transport. Probably involved in vesicular traffic. The polypeptide is Ras-related protein Rab7 (Pisum sativum (Garden pea)).